Reading from the N-terminus, the 449-residue chain is CBL-interacting protein kinase 31 (449 aa).

In terms of domain architecture, Protein kinase spans 20 to 275 (YELGRTIGEG…ISQILEDPWF (256 aa)). ATP contacts are provided by residues 26 to 34 (IGEGTFAKV) and K49. The active-site Proton acceptor is D143. Residues 161–190 (DFGLSALTEQVKADGLLHTTCGTPNYVAPE) are activation loop. The 25-residue stretch at 313–337 (DQPTSMNAFELISLNQALNLDNLFE) folds into the NAF domain.

It belongs to the protein kinase superfamily. CAMK Ser/Thr protein kinase family. SNF1 subfamily. May interact with CBL3. The cofactor is Mn(2+). Autophosphorylated. As to expression, highly expressed in leaf blade and leaf sheath, but not in other tissues.

The catalysed reaction is L-seryl-[protein] + ATP = O-phospho-L-seryl-[protein] + ADP + H(+). The enzyme catalyses L-threonyl-[protein] + ATP = O-phospho-L-threonyl-[protein] + ADP + H(+). Functionally, involved in cold stress tolerance. CIPK serine-threonine protein kinases interact with CBL proteins. Binding of a CBL protein to the regulatory NAF domain of CIPK protein lead to the activation of the kinase in a calcium-dependent manner. In Oryza sativa subsp. japonica (Rice), this protein is CBL-interacting protein kinase 31 (CIPK31).